Reading from the N-terminus, the 631-residue chain is MFDGYDSCSEDTSSSSSSEESEEEVAPLPSNLPIIKNNGQVYTYPDGKSGMATCEMCGMVGVRDAFYSKTKRFCSVSCSRSYSSNSKKASILARLQGKPPTKKAKVLQKQPLVAKLAAYAQYQATLQNQAKTKAGNSAISVEGFSWGNYINSNSFIAAPVACFKHAPMGTCWGDISENVRIEVPNTDCSLPTKVFWIAGIIKLAGYNALLRYEGFENDSSLDFWCNICGSDIHPVGWCAASGKPLVPPRTVQHKYTNWKAFLVKRLTGAKTLPPDFSQKVSESMQYPFKPCMRVEVVDKRHLCRTRVAVVESVIGGRLRLVYEESEDRTDDFWCHMHSPLIHHIGWSRSIGHRFKRSDITKKQDGHFDTPPHLFAKVKEVDQSGEWFKEGMKLEAIDPLNLSTICVATIRKVLADGFLMIGIDGSEAADGSDWFCYHATSPSIFPVGFCEINMIELTPPRGYTKLPFKWFDYLRETGSIAAPVKLFNKDVPNHGFRVGMKLEAVDLMEPRLICVATVTRIIHRLLRIHFDGWEEEYDQWVDCESPDLYPVGWCQLTGYQLQPPASQSSRESQSASSKQKKKAKSQQYKGHKKMTTSQLKEELLDGEDYSFLHGASDQESNGSATVYIKQEP.

The interval 1-31 (MFDGYDSCSEDTSSSSSSEESEEEVAPLPSN) is disordered. The FCS-type zinc-finger motif lies at 45–80 (PDGKSGMATCEMCGMVGVRDAFYSKTKRFCSVSCSR). Positions 54, 57, 74, and 78 each coordinate Zn(2+). K115 carries the N6-acetyllysine modification. MBT repeat units follow at residues 144–248 (FSWG…LVPP), 256–353 (TNWK…IGHR), 354–459 (FKRS…LTPP), and 467–563 (FKWF…LQPP). The segment at 563-631 (PASQSSRESQ…SATVYIKQEP (69 aa)) is disordered. Residues 564 to 576 (ASQSSRESQSASS) are compositionally biased toward low complexity. A compositionally biased stretch (basic residues) spans 577–593 (KQKKKAKSQQYKGHKKM).

Monomer. Component of the NuA4 histone acetyltransferase complex. Interacts with EPC1; interaction is direct and promotes recruitment of MBTD1 into the NuA4 histone acetyltransferase complex.

It is found in the nucleus. Its subcellular location is the chromosome. In terms of biological role, chromatin reader component of the NuA4 histone acetyltransferase complex, a multiprotein complex involved in transcriptional activation of select genes principally by acetylation of nucleosomal histones H4 and H2A. The NuA4 complex plays a direct role in repair of DNA double-strand breaks (DSBs) by promoting homologous recombination (HR). MBTD1 specifically recognizes and binds monomethylated and dimethylated 'Lys-20' on histone H4 (H4K20me1 and H4K20me2, respectively). In the NuA4 complex, MBTD1 promotes recruitment of the complex to H4K20me marks by competing with TP53BP1 for binding to H4K20me. Following recruitment to H4K20me at DNA breaks, the NuA4 complex catalyzes acetylation of 'Lys-15' on histone H2A (H2AK15), blocking the ubiquitination mark required for TP53BP1 localization at DNA breaks, thereby promoting homologous recombination (HR). In Mus musculus (Mouse), this protein is MBT domain-containing protein 1.